The primary structure comprises 400 residues: Tryptophan synthase beta chain (400 aa).

The residue at position 92 (Lys92) is an N6-(pyridoxal phosphate)lysine.

It belongs to the TrpB family. In terms of assembly, tetramer of two alpha and two beta chains. Pyridoxal 5'-phosphate serves as cofactor.

The catalysed reaction is (1S,2R)-1-C-(indol-3-yl)glycerol 3-phosphate + L-serine = D-glyceraldehyde 3-phosphate + L-tryptophan + H2O. Its pathway is amino-acid biosynthesis; L-tryptophan biosynthesis; L-tryptophan from chorismate: step 5/5. The beta subunit is responsible for the synthesis of L-tryptophan from indole and L-serine. The polypeptide is Tryptophan synthase beta chain (Leptospira borgpetersenii serovar Hardjo-bovis (strain JB197)).